The following is a 783-amino-acid chain: MATHPQTPTSSNAFSFISKGWREVRDSADADLRLMRDRANSFKDLATSFDRELENFFNSATPPFSVPAMRSPPPKEIEFVKSLRPKLSEIRRAYSSPDFSKKVLEKWRPRTQIRINLSAIKNAIVSAEEEEEGIVDFEKRRRRRLSFWEEWKGEGEGESRDWEPIRVLKTRLKEFEKRGSSFDAFKNSEFVEKVKSSLKSMCKEPLESKEVPPLDVPELLAYIVKQSGPFLDHLGVKRDICDKIVESLYSKCKNHQLLHSLSGEESSVLGNGNINDELDLRIASVLQSTGHRYEGGFWTDHAKHDPLDNERHVAIVTTASLPWMTGTAVNPLFRAAYLSQSAKQKVTLLVPWLCKSDQELVYPSNLTFTSPEEQEAYIRSWLEERIGFKADFKISFYPGKFSEARRSIIPAGDTSQFIPSRDADIAILEEPEHLNWYHHGKRWTDKFNHVVGIVHTNYLEYIKREKNGALQAFLVKHINNWVTRAYCHKVLRLSAATQDLPKSVICNVHGVNPKFLKIGEKIAAERELGQKAFTKGAYFLGKLVWAKGYKELIDLLAKHKADLDGFKLDVFGNGEDANEVQSAARRLDLNLNFQKGRDHADDSLHGYKVFINPSISDVLCTATAEALAMGKFVVCADHPSNEFFRSFPNCLTYRTSEDFVAKVKEALENEPYPLTPEQRYQLSWEAATQRFMEYSELDRILNKENNGEKASVDKGKLIAKSASMPNLTELVDGGLAFAHYCLTGNEFLRLCTGAIPGTRDYDKQHCKDLHLLPPLVENPIYGW.

The protein belongs to the glycosyltransferase group 1 family. Glycosyltransferase 4 subfamily. Expressed in leaves, roots and nodules.

It localises to the plastid. It is found in the chloroplast outer membrane. Its subcellular location is the plastid outer membrane. The enzyme catalyses a 1,2-diacyl-3-O-(beta-D-galactosyl)-sn-glycerol + UDP-alpha-D-galactose = a 1,2-diacyl-3-O-[alpha-D-galactosyl-(1-&gt;6)-beta-D-galactosyl]-sn-glycerol + UDP + H(+). In terms of biological role, involved in the synthesis of diacylglycerol galactolipids that are specifically found in thylakoid and in nodule peribacteroid membranes. Specific for alpha-glycosidic linkages. In Glycine max (Soybean), this protein is Digalactosyldiacylglycerol synthase 1, chloroplastic.